The chain runs to 492 residues: Catalase (492 aa).

Catalysis depends on residues histidine 65 and asparagine 138. Residue tyrosine 348 coordinates heme.

Belongs to the catalase family. In terms of assembly, homotetramer. Heme is required as a cofactor.

It localises to the cytoplasm. The protein resides in the cytosol. It is found in the peroxisome matrix. It carries out the reaction 2 H2O2 = O2 + 2 H2O. Catalyzes the degradation of hydrogen peroxide (H(2)O(2)) generated by peroxisomal oxidases to water and oxygen, thereby protecting cells from the toxic effects of hydrogen peroxide. The protein is Catalase of Helianthus annuus (Common sunflower).